A 235-amino-acid polypeptide reads, in one-letter code: Probable membrane-associated kinase regulator 6 (235 aa).

The disordered stretch occupies residues 108–140 (SAATEEESEPLDTTTSEKIDTRGLNSKPSPTSS). Over residues 130–140 (GLNSKPSPTSS) the composition is skewed to polar residues.

Its subcellular location is the cell membrane. Its function is as follows. May be involved in abscisic acid signaling by acting as a kinase regulator. In Arabidopsis thaliana (Mouse-ear cress), this protein is Probable membrane-associated kinase regulator 6 (MAKR6).